A 122-amino-acid chain; its full sequence is uncharacterized protein (122 aa).

Residues 10–120 (VFARILRGEI…AGRRLGPMIT (111 aa)) form the HIT domain. A Histidine triad motif motif is present at residues 104–108 (HLHIH).

This is an uncharacterized protein from Azospirillum brasilense.